Here is a 403-residue protein sequence, read N- to C-terminus: VITGMGALSPIGNDVKTTWENALKGVNGIDKITRIDTEPYSVHLAGELKNFNIEDHIDKKEARRMDRFTQYAIVAAREAVKDAQLDINENTADRIGVWIGSGIGGMETFEIAHKQLMDKGPRRVSPFFVPMLIPDMATGQVSIDLGAKGPNGATVTACATGTNSIGEAFKIVQRGDADAMITGGTEAPITHMAIAGFSASRALSTNDDIETACRPFQEGRDGFVMGEGAGILVIESLESAQARGANIYAEIVGYGTTGDAYHITAPAPEGEGGSRAMQAAMDDAGIEPKDVQYLNAHGTSTPVGDLNEVKAIKNTFGEAAKHLKVSSTKSMTGHLLGATGGIEAIFSALSIKDSKIAPTIHAVTPDPECDLDIVPNEAQDLDITYAMSNSLGFGGHNAVLVFK.

A Ketosynthase family 3 (KS3) domain is found at 1 to 403; that stretch reads VITGMGALSP…GGHNAVLVFK (403 aa). Residues C158, H297, and H334 each act as for beta-ketoacyl synthase activity in the active site.

It belongs to the thiolase-like superfamily. Beta-ketoacyl-ACP synthases family.

The enzyme catalyses a fatty acyl-[ACP] + malonyl-[ACP] + H(+) = a 3-oxoacyl-[ACP] + holo-[ACP] + CO2. The catalysed reaction is (9Z)-hexadecenoyl-[ACP] + malonyl-[ACP] + H(+) = 3-oxo-(11Z)-octadecenoyl-[ACP] + holo-[ACP] + CO2. It participates in lipid metabolism; fatty acid biosynthesis. In terms of biological role, involved in the type II fatty acid elongation cycle. Catalyzes the elongation of a wide range of acyl-ACP by the addition of two carbons from malonyl-ACP to an acyl acceptor. Can efficiently catalyze the conversion of palmitoleoyl-ACP (cis-hexadec-9-enoyl-ACP) to cis-vaccenoyl-ACP (cis-octadec-11-enoyl-ACP), an essential step in the thermal regulation of fatty acid composition. This chain is 3-oxoacyl-[acyl-carrier-protein] synthase 2 (fabF), found in Staphylococcus aureus.